Reading from the N-terminus, the 605-residue chain is MQTLLVSSLVVSLAAALPHYIRSNGIEASLLTDPKDVSGRTVDYIIAGGGLTGLTTAARLTENPNISVLVIESGSYESDRGPIIEDLNAYGDIFGSSVDHAYETVELATNNQTALIRSGNGLGGSTLVNGGTWTRPHKAQVDSWETVFGNEGWNWDNVAAYSLQAERARAPNAKQIAAGHYFNASCHGVNGTVHAGPRDTGDDYSPIVKALMSAVEDRGVPTKKDFGCGDPHGVSMFPNTLHEDQVRSDAAREWLLPNYQRPNLQVLTGQYVGKVLLSQNGTTPRAVGVEFGTHKGNTHNVYAKHEVLLAAGSAVSPTILEYSGIGMKSILEPLGIDTVVDLPVGLNLQDQTTATVRSRITSAGAGQGQAAWFATFNETFGDYSEKAHELLNTKLEQWAEEAVARGGFHNTTALLIQYENYRDWIVNHNVAYSELFLDTAGVASFDVWDLLPFTRGYVHILDKDPYLHHFAYDPQYFLNELDLLGQAAATQLARNISNSGAMQTYFAGETIPGDNLAYDADLSAWTEYIPYHFRPNYHGVGTCSMMPKEMGGVVDNAARVYGVQGLRVIDGSIPPTQMSSHVMTVFYAMALKISDAILEDYASMQ.

Residues 1-16 form the signal peptide; it reads MQTLLVSSLVVSLAAA. Residues Leu51 and Thr52 each contribute to the FAD site. Asn65 is a glycosylation site (N-linked (GlcNAc...) asparagine). Glu72 lines the FAD pocket. Asn111 carries N-linked (GlcNAc...) asparagine glycosylation. FAD contacts are provided by Ser125, Asn129, Gly130, and Thr132. N-linked (GlcNAc...) asparagine glycans are attached at residues Asn183 and Asn190. Cys186 and Cys228 are disulfide-bonded. Val272 is a binding site for FAD. Residues Asn280, Asn377, Asn410, and Asn495 are each glycosylated (N-linked (GlcNAc...) asparagine). His538 (proton acceptor) is an active-site residue. 2 residues coordinate O2: Arg559 and Val560. Residues Gly571 and Met583 each contribute to the FAD site.

It belongs to the GMC oxidoreductase family. Homodimer. Requires FAD as cofactor. The N-linked sugar chains of the glucose oxidase contributed to the high solubility of the enzyme in water.

The protein resides in the secreted. It localises to the cell wall. It is found in the cytoplasm. The protein localises to the extracellular space. Its subcellular location is the extracellular matrix. It carries out the reaction beta-D-glucose + O2 = D-glucono-1,5-lactone + H2O2. Its function is as follows. Glucose oxidase catalyzes the oxidation of beta-D-glucose to D-glucono-delta-lactone and hydrogen peroxide in the presence of molecular oxygen. D-glucono-delta-lactone is sequentially hydrolyzed by lactonase to D-gluconic acid, and the resulting hydrogen peroxide is hydrolyzed by catalase to oxygen and water. The activity shows high specificity to beta-D-glucose, with very low to no activity towards L-glucose, 2-deoxy-D-glucose, 3-deoxy-D-glucose, 4-deoxy-D-glucose, 5-deoxy-D-glucose, 6-deoxy-D-glucose, 3-O-methyl-D-glucose, 4-O-methyl-D-glucose, 6-O-methyl-D-glucose, 4,6-O-benzylidene-D-glucose, 5-thio-5-deoxy-D-glucose, D-mannose, D-allose, D-galactose, D-fructose, D-arabinose, D-xylose, trehalose, melibiose, L-mannomethylose, lactose, sucrose or 1,5-anhydro-D-glucitol. This chain is Glucose oxidase, found in Aspergillus niger.